Reading from the N-terminus, the 229-residue chain is 2-C-methyl-D-erythritol 4-phosphate cytidylyltransferase (229 aa).

Belongs to the IspD/TarI cytidylyltransferase family. IspD subfamily.

It carries out the reaction 2-C-methyl-D-erythritol 4-phosphate + CTP + H(+) = 4-CDP-2-C-methyl-D-erythritol + diphosphate. It functions in the pathway isoprenoid biosynthesis; isopentenyl diphosphate biosynthesis via DXP pathway; isopentenyl diphosphate from 1-deoxy-D-xylulose 5-phosphate: step 2/6. Its function is as follows. Catalyzes the formation of 4-diphosphocytidyl-2-C-methyl-D-erythritol from CTP and 2-C-methyl-D-erythritol 4-phosphate (MEP). This is 2-C-methyl-D-erythritol 4-phosphate cytidylyltransferase from Neisseria meningitidis serogroup C / serotype 2a (strain ATCC 700532 / DSM 15464 / FAM18).